Reading from the N-terminus, the 174-residue chain is Early nodulin-11 (174 aa).

Residues 1–25 (MASFFLYSLGLVFLSALTLVPLGLA) form the signal peptide. The disordered stretch occupies residues 28–174 (SPSHNMPPNP…GNQPPPSIHF (147 aa)). Residues 53-65 (YNPPIYKPPPTYK) are compositionally biased toward pro residues. The segment covering 70-83 (KQPINKSPNKKPLL) has biased composition (low complexity). The span at 122–132 (PQKKPPSRKRP) shows a compositional bias: basic residues. 2 stretches are compositionally biased toward pro residues: residues 134–150 (NTPPNKKPPLPKPPVNK) and 159–174 (KRPPPYGNQPPPSIHF).

This sequence belongs to the plant proline-rich protein superfamily. As to expression, expressed in cotyledons, leaf vasculature, stomatal guard cells and trichomes. In the embryo, expressed in embryo suspensors, the epidermis and underlying tissues of the cotyledons, hypocotyls, and radicle in maturing embryos, and the outer cell layer of the endosperm.

The protein localises to the secreted. Its subcellular location is the cell wall. Its function is as follows. Involved in the infection process during the plant-rhizobium interaction. Involved in actinorhizal root nodulation. Involved in symbiotic association with the nitrogen-fixing actinomycete Frankia spp. The sequence is that of Early nodulin-11 from Medicago truncatula (Barrel medic).